The sequence spans 711 residues: Putative membrane protein IgaA homolog (711 aa).

M1 is a topological domain (periplasmic). A helical membrane pass occupies residues 2–22 (STIVIFLAALLACSLLAGWLI). Over 23–204 (KVRSRRRQLP…YALSRPRGLR (182 aa)) the chain is Cytoplasmic. The next 2 helical transmembrane spans lie at 205-225 (EALLIVASFLMFFFCLITPDV) and 226-246 (FVPWLAGGALLLLGAGLWGLF). Residues 247–339 (APPAKSSLRE…KNFPLQHWLR (93 aa)) lie on the Cytoplasmic side of the membrane. The chain crosses the membrane as a helical span at residues 340-360 (STIIAAGSLLVLFMLLFWIPL). Over 361–655 (DMPLKFTLSW…IPDRSGLWRY (295 aa)) the chain is Periplasmic. A helical transmembrane segment spans residues 656 to 676 (LSTTLLLLTMLGSAIYNGVQA). Residues 677–711 (WRRYQRHRTRMMEIQAYYESCLNPQLITPSESLIE) are Cytoplasmic-facing.

It belongs to the IgaA family.

Its subcellular location is the cell inner membrane. This Escherichia coli (strain K12) protein is Putative membrane protein IgaA homolog (yrfF).